A 129-amino-acid polypeptide reads, in one-letter code: Large-conductance mechanosensitive channel (129 aa).

3 consecutive transmembrane segments (helical) span residues 14 to 34, 38 to 58, and 67 to 87; these read IIDLAVAVVIGGAFGKIVTSL, IIMPLVGVLTGGIDLTASFVY, and LGVFLQSIIDFLIIAFAIFMA.

Belongs to the MscL family. In terms of assembly, homopentamer.

Its subcellular location is the cell membrane. Functionally, channel that opens in response to stretch forces in the membrane lipid bilayer. May participate in the regulation of osmotic pressure changes within the cell. The polypeptide is Large-conductance mechanosensitive channel (Lysinibacillus sphaericus (strain C3-41)).